We begin with the raw amino-acid sequence, 130 residues long: Histone H2A type 1-B/E (130 aa).

A disordered region spans residues 1-22; sequence MSGRGKQGGKARAKAKTRSSRA. S2 bears the N-acetylserine mark. S2 carries the phosphoserine; by RPS6KA5 modification. Position 4 is a citrulline; alternate (R4). R4 is modified (symmetric dimethylarginine; by PRMT5; alternate). N6-(2-hydroxyisobutyryl)lysine; alternate is present on residues K6 and K10. An N6-acetyllysine; alternate modification is found at K6. A compositionally biased stretch (basic residues) spans 7–19; the sequence is QGGKARAKAKTRS. An N6-(beta-hydroxybutyryl)lysine; alternate mark is found at K10 and K14. K10 carries the N6-lactoyllysine; alternate modification. K10 carries the post-translational modification N6-succinyllysine; alternate. Residue K14 forms a Glycyl lysine isopeptide (Lys-Gly) (interchain with G-Cter in ubiquitin); alternate linkage. Residue K16 forms a Glycyl lysine isopeptide (Lys-Gly) (interchain with G-Cter in ubiquitin) linkage. At K37 the chain carries N6-(2-hydroxyisobutyryl)lysine; alternate. Position 37 is an N6-(beta-hydroxybutyryl)lysine; alternate (K37). K37 bears the N6-crotonyllysine; alternate mark. Residues K75 and K76 each carry the N6-(2-hydroxyisobutyryl)lysine modification. Position 96 is an N6-(2-hydroxyisobutyryl)lysine; alternate (K96). At K96 the chain carries N6-(beta-hydroxybutyryl)lysine; alternate. N6-succinyllysine; alternate is present on K96. N6-glutaryllysine; alternate is present on K96. An N5-methylglutamine modification is found at Q105. K119 is subject to N6-(2-hydroxyisobutyryl)lysine; alternate. K119 bears the N6-(beta-hydroxybutyryl)lysine; alternate mark. Residues K119 and K120 each carry the N6-crotonyllysine; alternate modification. N6-glutaryllysine; alternate is present on residues K119 and K120. A Glycyl lysine isopeptide (Lys-Gly) (interchain with G-Cter in ubiquitin); alternate cross-link involves residue K120. T121 bears the Phosphothreonine; by DCAF1 mark. Position 126 is an N6-crotonyllysine; alternate (K126). K126 is modified (N6-glutaryllysine; alternate).

Belongs to the histone H2A family. The nucleosome is a histone octamer containing two molecules each of H2A, H2B, H3 and H4 assembled in one H3-H4 heterotetramer and two H2A-H2B heterodimers. The octamer wraps approximately 147 bp of DNA. In terms of processing, deiminated on Arg-4 in granulocytes upon calcium entry. Monoubiquitination of Lys-120 (H2AK119Ub) by RING1, TRIM37 and RNF2/RING2 complex gives a specific tag for epigenetic transcriptional repression and participates in X chromosome inactivation of female mammals. It is involved in the initiation of both imprinted and random X inactivation. Ubiquitinated H2A is enriched in inactive X chromosome chromatin. Ubiquitination of H2A functions downstream of methylation of 'Lys-27' of histone H3 (H3K27me). H2AK119Ub by RNF2/RING2 can also be induced by ultraviolet and may be involved in DNA repair. Monoubiquitination of Lys-120 (H2AK119Ub) by TRIM37 may promote transformation of cells in a number of breast cancers. Following DNA double-strand breaks (DSBs), it is ubiquitinated through 'Lys-63' linkage of ubiquitin moieties by the E2 ligase UBE2N and the E3 ligases RNF8 and RNF168, leading to the recruitment of repair proteins to sites of DNA damage. Ubiquitination at Lys-14 and Lys-16 (H2AK13Ub and H2AK15Ub, respectively) in response to DNA damage is initiated by RNF168 that mediates monoubiquitination at these 2 sites, and 'Lys-63'-linked ubiquitin are then conjugated to monoubiquitin; RNF8 is able to extend 'Lys-63'-linked ubiquitin chains in vitro. Deubiquitinated by USP51 at Lys-14 and Lys-16 (H2AK13Ub and H2AK15Ub, respectively) after damaged DNA is repaired. H2AK119Ub and ionizing radiation-induced 'Lys-63'-linked ubiquitination (H2AK13Ub and H2AK15Ub) are distinct events. Post-translationally, phosphorylation on Ser-2 (H2AS1ph) is enhanced during mitosis. Phosphorylation on Ser-2 by RPS6KA5/MSK1 directly represses transcription. Acetylation of H3 inhibits Ser-2 phosphorylation by RPS6KA5/MSK1. Phosphorylation at Thr-121 (H2AT120ph) by DCAF1 is present in the regulatory region of many tumor suppresor genes and down-regulates their transcription. In terms of processing, glutamine methylation at Gln-105 (H2AQ104me) by FBL is specifically dedicated to polymerase I. It is present at 35S ribosomal DNA locus and impairs binding of the FACT complex. Symmetric dimethylation on Arg-4 by the PRDM1/PRMT5 complex may play a crucial role in the germ-cell lineage. Post-translationally, crotonylation (Kcr) is specifically present in male germ cells and marks testis-specific genes in post-meiotic cells, including X-linked genes that escape sex chromosome inactivation in haploid cells. Crotonylation marks active promoters and enhancers and confers resistance to transcriptional repressors. It is also associated with post-meiotically activated genes on autosomes. In terms of processing, lactylated in macrophages by EP300/P300 by using lactoyl-CoA directly derived from endogenous or exogenous lactate, leading to stimulates gene transcription.

It localises to the nucleus. It is found in the chromosome. Functionally, core component of nucleosome. Nucleosomes wrap and compact DNA into chromatin, limiting DNA accessibility to the cellular machineries which require DNA as a template. Histones thereby play a central role in transcription regulation, DNA repair, DNA replication and chromosomal stability. DNA accessibility is regulated via a complex set of post-translational modifications of histones, also called histone code, and nucleosome remodeling. This Homo sapiens (Human) protein is Histone H2A type 1-B/E.